The primary structure comprises 318 residues: Transaldolase (318 aa).

Catalysis depends on Lys132, which acts as the Schiff-base intermediate with substrate.

The protein belongs to the transaldolase family. Type 1 subfamily. In terms of assembly, homodimer.

Its subcellular location is the cytoplasm. The enzyme catalyses D-sedoheptulose 7-phosphate + D-glyceraldehyde 3-phosphate = D-erythrose 4-phosphate + beta-D-fructose 6-phosphate. It functions in the pathway carbohydrate degradation; pentose phosphate pathway; D-glyceraldehyde 3-phosphate and beta-D-fructose 6-phosphate from D-ribose 5-phosphate and D-xylulose 5-phosphate (non-oxidative stage): step 2/3. In terms of biological role, transaldolase is important for the balance of metabolites in the pentose-phosphate pathway. The protein is Transaldolase of Shewanella baltica (strain OS195).